The primary structure comprises 545 residues: CTP synthase (545 aa).

Residues 1–267 are amidoligase domain; that stretch reads MTKFIFVTGG…AEQVLNLLQM (267 aa). Residue serine 13 participates in CTP binding. Serine 13 is a binding site for UTP. Residues 14 to 19 and aspartate 71 contribute to the ATP site; that span reads SIGKGI. Residues aspartate 71 and glutamate 141 each contribute to the Mg(2+) site. CTP is bound by residues 148-150, 188-193, and lysine 224; these read DIE and KTKPTQ. Residues 188–193 and lysine 224 contribute to the UTP site; that span reads KTKPTQ. Residues 292–534 enclose the Glutamine amidotransferase type-1 domain; the sequence is EIAIVGKYVQ…IQAAIALSLS (243 aa). Glycine 354 serves as a coordination point for L-glutamine. The active-site Nucleophile; for glutamine hydrolysis is cysteine 381. L-glutamine-binding positions include 382–385, glutamate 405, and arginine 462; that span reads LGMQ. Catalysis depends on residues histidine 507 and glutamate 509.

It belongs to the CTP synthase family. Homotetramer.

It carries out the reaction UTP + L-glutamine + ATP + H2O = CTP + L-glutamate + ADP + phosphate + 2 H(+). It catalyses the reaction L-glutamine + H2O = L-glutamate + NH4(+). The catalysed reaction is UTP + NH4(+) + ATP = CTP + ADP + phosphate + 2 H(+). It participates in pyrimidine metabolism; CTP biosynthesis via de novo pathway; CTP from UDP: step 2/2. Allosterically activated by GTP, when glutamine is the substrate; GTP has no effect on the reaction when ammonia is the substrate. The allosteric effector GTP functions by stabilizing the protein conformation that binds the tetrahedral intermediate(s) formed during glutamine hydrolysis. Inhibited by the product CTP, via allosteric rather than competitive inhibition. Its function is as follows. Catalyzes the ATP-dependent amination of UTP to CTP with either L-glutamine or ammonia as the source of nitrogen. Regulates intracellular CTP levels through interactions with the four ribonucleotide triphosphates. The sequence is that of CTP synthase from Nostoc punctiforme (strain ATCC 29133 / PCC 73102).